The sequence spans 244 residues: 7-cyano-7-deazaguanine synthase (244 aa).

ATP is bound at residue 14–24 (FSGGQDSATCV). Zn(2+)-binding residues include Cys202, Cys217, Cys220, and Cys223.

The protein belongs to the QueC family. Zn(2+) is required as a cofactor.

It catalyses the reaction 7-carboxy-7-deazaguanine + NH4(+) + ATP = 7-cyano-7-deazaguanine + ADP + phosphate + H2O + H(+). It functions in the pathway purine metabolism; 7-cyano-7-deazaguanine biosynthesis. Its function is as follows. Catalyzes the ATP-dependent conversion of 7-carboxy-7-deazaguanine (CDG) to 7-cyano-7-deazaguanine (preQ(0)). This chain is 7-cyano-7-deazaguanine synthase, found in Burkholderia thailandensis (strain ATCC 700388 / DSM 13276 / CCUG 48851 / CIP 106301 / E264).